The chain runs to 504 residues: 26S proteasome non-ATPase regulatory subunit 5 (504 aa).

Ala-2 is modified (N-acetylalanine).

Belongs to the proteasome subunit S5B/HSM3 family. As to quaternary structure, interacts with PSMC1, PSMC2, PSMD1 and PSMD6. Part of transient complex containing PSMD5, PSMC2, PSMC1 and PSMD2 formed during the assembly of the 26S proteasome.

In terms of biological role, acts as a chaperone during the assembly of the 26S proteasome, specifically of the base subcomplex of the PA700/19S regulatory complex (RC). In the initial step of the base subcomplex assembly is part of an intermediate PSMD5:PSMC2:PSMC1:PSMD2 module which probably assembles with a PSMD10:PSMC4:PSMC5:PAAF1 module followed by dissociation of PSMD5. The protein is 26S proteasome non-ATPase regulatory subunit 5 (Psmd5) of Mus musculus (Mouse).